Reading from the N-terminus, the 264-residue chain is Undecaprenyl-diphosphatase (264 aa).

A run of 7 helical transmembrane segments spans residues 38-58, 75-95, 106-126, 136-156, 181-201, 217-237, and 242-262; these read RSDF…VLVF, REYV…GLVV, VSPV…VEAY, VTWT…VFPG, FVFL…FLEM, VAFL…MGYI, and FTAF…WLPS.

The protein belongs to the UppP family.

The protein resides in the cell inner membrane. It carries out the reaction di-trans,octa-cis-undecaprenyl diphosphate + H2O = di-trans,octa-cis-undecaprenyl phosphate + phosphate + H(+). In terms of biological role, catalyzes the dephosphorylation of undecaprenyl diphosphate (UPP). Confers resistance to bacitracin. This Stenotrophomonas maltophilia (strain R551-3) protein is Undecaprenyl-diphosphatase.